The chain runs to 431 residues: DNA polymerase delta subunit 2 (431 aa).

The protein belongs to the DNA polymerase delta/II small subunit family. In terms of assembly, component of both the DNA polymerase delta and DNA polymerase zeta complexes. The DNA polymerase delta complex consisting of three subunits: the catalytic subunit PolD1 and two accessory subunits PolD2/Pol31 and PolD3/Pol32. Within the delta complex, interacts with both PolD1 and PolD3, and is able to interact with PolD1 in the absence of PolD3. Component of the DNA polymerase zeta complex consisting of four subunits: the catalytic subunit PolZ1 and three accessory subunits PolZ2/Rev7, PolD2/Pol31 and PolD3/Pol32. In terms of tissue distribution, expressed in ovaries and embryos (at the protein level).

The protein resides in the nucleus. It is found in the nucleoplasm. Its function is as follows. Accessory component of both the DNA polymerase delta complex and possibly the DNA polymerase zeta complex. As a component of the delta complex, participates in high fidelity genome replication, including lagging strand synthesis, DNA recombination and repair. Appears to promote the function of the DNA pol-delta complex accessory subunit PolD3 in both embryonic and postembryonic somatic cells. This is DNA polymerase delta subunit 2 from Drosophila melanogaster (Fruit fly).